A 1174-amino-acid chain; its full sequence is Creatine kinase, flagellar (1174 aa).

Polar residues predominate over residues 1–14; the sequence is MGCAASSQQTTATG. The segment at 1–62 is disordered; sequence MGCAASSQQT…PFVEPDPNYP (62 aa). Positions 18–39 are enriched in low complexity; the sequence is AAGEKANPAPANNNPNAANKAE. The region spanning 53–139 is the Phosphagen kinase N-terminal 1 domain; the sequence is PFVEPDPNYP…FDPTIDKRHN (87 aa). The 1; approximate repeat unit spans residues 61–414; the sequence is YPDLSKHNNY…EKALEKGSDI (354 aa). One can recognise a Phosphagen kinase C-terminal 1 domain in the interval 166–408; the sequence is YVLSCRVRTG…KKLIELEKAL (243 aa). ATP contacts are provided by residues 169-173, His232, Arg277, and 333-337; these read SCRVR and RAGVH. The 87-residue stretch at 426–512 folds into the Phosphagen kinase N-terminal 2 domain; sequence RAEQVKEGYP…FDPVIDARHG (87 aa). The stretch at 434-787 is one 2; approximate repeat; the sequence is YPDLSKHNNH…EKKLEKGEDI (354 aa). A Phosphagen kinase C-terminal 2 domain is found at 539 to 781; sequence YVLSCRVRTG…ELLVQMEKKL (243 aa). ATP is bound by residues 542–546, His605, Arg706, 734–739, and Asp749; these read SCRVR and RGTGGV. In terms of domain architecture, Phosphagen kinase N-terminal 3 spans 800-886; sequence PIKPFSYDYP…FDPVISARHG (87 aa). The stretch at 808-1161 is one 3; approximate repeat; sequence YPDFSLHNNW…EKALMKGEDI (354 aa). The 243-residue stretch at 913–1155 folds into the Phosphagen kinase C-terminal 3 domain; that stretch reads FVLSCRVRTG…KLLVNLEKAL (243 aa).

Belongs to the ATP:guanido phosphotransferase family. Monomer.

It is found in the cytoplasm. The protein localises to the cytoskeleton. Its subcellular location is the flagellum axoneme. It catalyses the reaction creatine + ATP = N-phosphocreatine + ADP + H(+). Its function is as follows. This axonemal protein participates in an energy shuttle that utilizes phosphocreatine to transfer the energy from ATP generated by the mitochondrion in the sperm head to dynein in the distal portions of the flagellum. The protein is Creatine kinase, flagellar of Strongylocentrotus purpuratus (Purple sea urchin).